The primary structure comprises 347 residues: Methylthioribose-1-phosphate isomerase (347 aa).

Substrate-binding positions include 47 to 49, R90, and Q199; that span reads RGA. D240 (proton donor) is an active-site residue. 250-251 provides a ligand contact to substrate; sequence NK.

Belongs to the eIF-2B alpha/beta/delta subunits family. MtnA subfamily.

The catalysed reaction is 5-(methylsulfanyl)-alpha-D-ribose 1-phosphate = 5-(methylsulfanyl)-D-ribulose 1-phosphate. It functions in the pathway amino-acid biosynthesis; L-methionine biosynthesis via salvage pathway; L-methionine from S-methyl-5-thio-alpha-D-ribose 1-phosphate: step 1/6. Its function is as follows. Catalyzes the interconversion of methylthioribose-1-phosphate (MTR-1-P) into methylthioribulose-1-phosphate (MTRu-1-P). The protein is Methylthioribose-1-phosphate isomerase of Natranaerobius thermophilus (strain ATCC BAA-1301 / DSM 18059 / JW/NM-WN-LF).